The chain runs to 426 residues: Serine hydroxymethyltransferase (426 aa).

(6S)-5,6,7,8-tetrahydrofolate contacts are provided by residues L118 and 122–124 (GHL). K227 carries the N6-(pyridoxal phosphate)lysine modification.

This sequence belongs to the SHMT family. In terms of assembly, homodimer. The cofactor is pyridoxal 5'-phosphate.

The protein resides in the cytoplasm. The catalysed reaction is (6R)-5,10-methylene-5,6,7,8-tetrahydrofolate + glycine + H2O = (6S)-5,6,7,8-tetrahydrofolate + L-serine. It participates in one-carbon metabolism; tetrahydrofolate interconversion. It functions in the pathway amino-acid biosynthesis; glycine biosynthesis; glycine from L-serine: step 1/1. Catalyzes the reversible interconversion of serine and glycine with tetrahydrofolate (THF) serving as the one-carbon carrier. This reaction serves as the major source of one-carbon groups required for the biosynthesis of purines, thymidylate, methionine, and other important biomolecules. Also exhibits THF-independent aldolase activity toward beta-hydroxyamino acids, producing glycine and aldehydes, via a retro-aldol mechanism. The chain is Serine hydroxymethyltransferase from Mycolicibacterium paratuberculosis (strain ATCC BAA-968 / K-10) (Mycobacterium paratuberculosis).